A 115-amino-acid polypeptide reads, in one-letter code: DNA-directed RNA polymerase subunit omega (115 aa).

Belongs to the RNA polymerase subunit omega family. In terms of assembly, the RNAP catalytic core consists of 2 alpha, 1 beta, 1 beta' and 1 omega subunit. When a sigma factor is associated with the core the holoenzyme is formed, which can initiate transcription.

It carries out the reaction RNA(n) + a ribonucleoside 5'-triphosphate = RNA(n+1) + diphosphate. Its function is as follows. Promotes RNA polymerase assembly. Latches the N- and C-terminal regions of the beta' subunit thereby facilitating its interaction with the beta and alpha subunits. In Cutibacterium acnes (strain DSM 16379 / KPA171202) (Propionibacterium acnes), this protein is DNA-directed RNA polymerase subunit omega.